The primary structure comprises 306 residues: Phosphoadenosine phosphosulfate reductase (306 aa).

Disordered regions lie at residues 1 to 30 and 245 to 266; these read MPAK…VSGG and YHST…KGQA.

This sequence belongs to the PAPS reductase family. CysH subfamily.

It catalyses the reaction [thioredoxin]-disulfide + sulfite + adenosine 3',5'-bisphosphate + 2 H(+) = [thioredoxin]-dithiol + 3'-phosphoadenylyl sulfate. Its pathway is sulfur metabolism; hydrogen sulfide biosynthesis; sulfite from sulfate: step 3/3. The NADP dependent reduction of PAPS into sulfite involves thioredoxin which probably plays the role of a thiol carrier. This is Phosphoadenosine phosphosulfate reductase (sA) from Emericella nidulans (strain FGSC A4 / ATCC 38163 / CBS 112.46 / NRRL 194 / M139) (Aspergillus nidulans).